The following is a 276-amino-acid chain: Light-independent protochlorophyllide reductase iron-sulfur ATP-binding protein (276 aa).

ATP is bound by residues 12–17 (GIGKST) and K41. Mg(2+) is bound at residue S16. Residues C97 and C131 each contribute to the [4Fe-4S] cluster site. 182 to 183 (NR) contributes to the ATP binding site.

Belongs to the NifH/BchL/ChlL family. As to quaternary structure, homodimer. Protochlorophyllide reductase is composed of three subunits; BchL, BchN and BchB. [4Fe-4S] cluster is required as a cofactor.

The catalysed reaction is chlorophyllide a + oxidized 2[4Fe-4S]-[ferredoxin] + 2 ADP + 2 phosphate = protochlorophyllide a + reduced 2[4Fe-4S]-[ferredoxin] + 2 ATP + 2 H2O. Its pathway is porphyrin-containing compound metabolism; bacteriochlorophyll biosynthesis (light-independent). Functionally, component of the dark-operative protochlorophyllide reductase (DPOR) that uses Mg-ATP and reduced ferredoxin to reduce ring D of protochlorophyllide (Pchlide) to form chlorophyllide a (Chlide). This reaction is light-independent. The L component serves as a unique electron donor to the NB-component of the complex, and binds Mg-ATP. This chain is Light-independent protochlorophyllide reductase iron-sulfur ATP-binding protein, found in Chlorobaculum tepidum (strain ATCC 49652 / DSM 12025 / NBRC 103806 / TLS) (Chlorobium tepidum).